The sequence spans 107 residues: Ferredoxin (107 aa).

Residues 1-8 (MVSGVSRN) constitute a propeptide that is removed on maturation. C45, C51, and C54 together coordinate [2Fe-2S] cluster.

The cofactor is [2Fe-2S] cluster.

It is found in the hydrogenosome. Ferredoxins are iron-sulfur proteins that transfer electrons in a wide variety of metabolic reactions. In Psalteriomonas lanterna (Amoeboflagellate), this protein is Ferredoxin.